Here is a 742-residue protein sequence, read N- to C-terminus: 5-methyltetrahydropteroyltriglutamate--homocysteine methyltransferase (742 aa).

5-methyltetrahydropteroyltri-L-glutamate is bound by residues 18–21 and Lys112; that span reads REWK. L-homocysteine is bound by residues 420–422 and Glu473; that span reads IGS. Residues 420-422 and Glu473 contribute to the L-methionine site; that span reads IGS. 5-methyltetrahydropteroyltri-L-glutamate is bound at residue Trp550. Asp588 is an L-homocysteine binding site. Asp588 provides a ligand contact to L-methionine. Glu594 contacts 5-methyltetrahydropteroyltri-L-glutamate. His630, Cys632, and Glu654 together coordinate Zn(2+). The active-site Proton donor is the His683. Cys715 is a binding site for Zn(2+).

Belongs to the vitamin-B12 independent methionine synthase family. Requires Zn(2+) as cofactor.

The catalysed reaction is 5-methyltetrahydropteroyltri-L-glutamate + L-homocysteine = tetrahydropteroyltri-L-glutamate + L-methionine. It functions in the pathway amino-acid biosynthesis; L-methionine biosynthesis via de novo pathway; L-methionine from L-homocysteine (MetE route): step 1/1. Catalyzes the transfer of a methyl group from 5-methyltetrahydrofolate to homocysteine resulting in methionine formation. This Staphylococcus aureus (strain Mu3 / ATCC 700698) protein is 5-methyltetrahydropteroyltriglutamate--homocysteine methyltransferase.